Here is a 20-residue protein sequence, read N- to C-terminus: Pregnancy-associated glycoprotein 61C (20 aa).

The protein belongs to the peptidase A1 family. In terms of processing, N-glycosylated. Expressed in chorionic epithelium (trophectoderm).

Its subcellular location is the secreted. The protein localises to the extracellular space. The chain is Pregnancy-associated glycoprotein 61C from Bubalus bubalis (Domestic water buffalo).